The primary structure comprises 146 residues: LFDQKTIKYIPIHYVLNISPSQEPNYYQHRPVVPINNQQMPYRYYARPVAVRPHAQIPQWQVLPNIYPSTVVRHPYRRPSFIAIPPKKLQDKTVRPNINTIATVEPTLIPTTEPTVNNVVVPEASSEFIITSTPETTTIPVTSPVV.

2 O-linked (GalNAc...) threonine glycosylation sites follow: Thr-107 and Thr-112. Ser-125 carries the phosphoserine; alternate modification. O-linked (GalNAc...) serine; alternate glycosylation occurs at Ser-125. An O-linked (GalNAc...) threonine glycan is attached at Thr-142. At Ser-143 the chain carries Phosphoserine.

Belongs to the kappa-casein family. In terms of tissue distribution, mammary gland specific. Secreted in milk.

The protein localises to the secreted. In terms of biological role, kappa-casein stabilizes micelle formation, preventing casein precipitation in milk. The protein is Kappa-casein (CSN3) of Tapirus indicus (Asiatic tapir).